Reading from the N-terminus, the 236-residue chain is Osmoprotectant import permease protein OsmY (236 aa).

6 helical membrane passes run 9 to 29 (VLGF…GIGL), 47 to 67 (LMLV…SGIL), 95 to 115 (VLAL…VALF), 126 to 146 (TYAG…GIGM), 180 to 200 (PLAF…GIYL), and 207 to 227 (ILGA…LAWF). One can recognise an ABC transmembrane type-1 domain in the interval 43–224 (GQRHLMLVFT…LFALILDTLL (182 aa)).

Belongs to the binding-protein-dependent transport system permease family. As to quaternary structure, the complex is composed of two ATP-binding proteins (OsmV), two transmembrane proteins (OsmW and OsmY) and a solute-binding protein (OsmX).

The protein localises to the cell inner membrane. Its function is as follows. Part of the OsmU ABC transporter complex, which is involved in the uptake of osmoprotectants such as choline-O-sulfate and glycine betaine. Probably responsible for the translocation of the substrate across the membrane. This Salmonella typhimurium (strain LT2 / SGSC1412 / ATCC 700720) protein is Osmoprotectant import permease protein OsmY (osmY).